Consider the following 274-residue polypeptide: Large ribosomal subunit protein uL2 (274 aa).

Disordered regions lie at residues 34 to 54 and 224 to 261; these read LEKK…TRHI and VAMN…KTRA.

This sequence belongs to the universal ribosomal protein uL2 family. As to quaternary structure, part of the 50S ribosomal subunit. Forms a bridge to the 30S subunit in the 70S ribosome.

In terms of biological role, one of the primary rRNA binding proteins. Required for association of the 30S and 50S subunits to form the 70S ribosome, for tRNA binding and peptide bond formation. It has been suggested to have peptidyltransferase activity; this is somewhat controversial. Makes several contacts with the 16S rRNA in the 70S ribosome. This is Large ribosomal subunit protein uL2 from Ectopseudomonas mendocina (strain ymp) (Pseudomonas mendocina).